The following is a 66-amino-acid chain: Large ribosomal subunit protein bL32 (66 aa).

Over residues 1 to 19 (MAIVPKRKTSKQRKHKRNT) the composition is skewed to basic residues. The interval 1–21 (MAIVPKRKTSKQRKHKRNTHS) is disordered.

The protein belongs to the bacterial ribosomal protein bL32 family.

In Mycoplasmopsis synoviae (strain 53) (Mycoplasma synoviae), this protein is Large ribosomal subunit protein bL32.